Reading from the N-terminus, the 185-residue chain is MGCDDGRVEKLGPQAGFTAVACISWDNRLRLPLAGSLGLVRVDGVDATSVLAGLVLRLGAAGRPVLLDSLTIGGFNIVSPPGVERLTGSPVLAVYNYRPSLERLESGLRSSRLPLAGVRARVLSLVEEAAEASTPHGPVYLVAWGLEASEARRLVLETQVYGRKPEPVRIAHYTASEASEALRRV.

This sequence belongs to the UPF0215 family.

The chain is UPF0215 protein APE_0476.1 from Aeropyrum pernix (strain ATCC 700893 / DSM 11879 / JCM 9820 / NBRC 100138 / K1).